The primary structure comprises 396 residues: MSATDRMGPRAVPGLRLALLLLLVLGTPKSGVQGQEGLDFPEYDGVDRVINVNAKNYKNVFKKYEVLALLYHEPPEDDKASQRQFEMEELILELAAQVLEDKGVGFGLVDSEKDAAVAKKLGLTEVDSMYVFKGDEVIEYDGEFSADTIVEFLLDVLEDPVELIEGERELQAFENIEDEIKLIGYFKSKDSEHYKAFEDAAEEFHPYIPFFATFDSKVAKKLTLKLNEIDFYEAFMEEPVTIPDKPNSEEEIVNFVEEHRRSTLRKLKPESMYETWEDDMDGIHIVAFAEEADPDGFEFLETLKAVAQDNTENPDLSIIWIDPDDFPLLVPYWEKTFDIDLSAPQIGVVNVTDADSVWMEMDDEEDLPSAEELEDWLEDVLEGEINTEDDDDDDDD.

The N-terminal stretch at 1 to 34 (MSATDRMGPRAVPGLRLALLLLLVLGTPKSGVQG) is a signal peptide. Residue Y43 is modified to Phosphotyrosine. S81 carries the post-translational modification Phosphoserine. Phosphothreonine is present on T124. A Phosphoserine modification is found at S216. The N-linked (GlcNAc...) asparagine glycan is linked to N350.

This sequence belongs to the calsequestrin family. As to quaternary structure, monomer; increases in response to a depletion of intracellular calcium. Homodimer. Homotetramer and homopolymer. Can form linear homooligomers. Ca(2+) ions promote oligomerization. Interacts (via C-terminal end and preferentially with the monomeric form) with STIM1; this interaction increases in response to a depletion of intracellular calcium, decreases both STIM1 aggregation and clustering, interaction of STIM1 with ORAI1 and store-operated Ca(2+) entry (SOCE) activity. Interacts with ASPH and TRDN. Post-translationally, N-glycosylated. Expressed in myoblasts (at protein level).

It localises to the endoplasmic reticulum. It is found in the sarcoplasmic reticulum. The protein resides in the sarcoplasmic reticulum lumen. Its subcellular location is the sarcoplasmic reticulum membrane. The protein localises to the mitochondrion matrix. Calsequestrin is a high-capacity, moderate affinity, calcium-binding protein and thus acts as an internal calcium store in muscle. Calcium ions are bound by clusters of acidic residues at the protein surface, often at the interface between subunits. Can bind around 80 Ca(2+) ions. Regulates the release of lumenal Ca(2+) via the calcium release channel RYR1; this plays an important role in triggering muscle contraction. Negatively regulates store-operated Ca(2+) entry (SOCE) activity. In Homo sapiens (Human), this protein is Calsequestrin-1 (CASQ1).